The following is a 262-amino-acid chain: Cell division protein ZapD (262 aa).

The protein belongs to the ZapD family. In terms of assembly, interacts with FtsZ.

The protein localises to the cytoplasm. Functionally, cell division factor that enhances FtsZ-ring assembly. Directly interacts with FtsZ and promotes bundling of FtsZ protofilaments, with a reduction in FtsZ GTPase activity. This is Cell division protein ZapD from Nitrosomonas europaea (strain ATCC 19718 / CIP 103999 / KCTC 2705 / NBRC 14298).